Consider the following 324-residue polypeptide: Ribose 1,5-bisphosphate isomerase (324 aa).

Substrate is bound by residues 22 to 25 and R65; that span reads RGAG. The Proton acceptor role is filled by C135. 137 to 139 contacts substrate; the sequence is SKA. D204 acts as the Proton donor in catalysis. Residues 214–215 and K240 contribute to the substrate site; that span reads NK.

The protein belongs to the eIF-2B alpha/beta/delta subunits family. R15P isomerase subfamily.

It catalyses the reaction alpha-D-ribose 1,5-bisphosphate = D-ribulose 1,5-bisphosphate. Its function is as follows. Catalyzes the isomerization of ribose 1,5-bisphosphate (R15P) to ribulose 1,5-bisphosphate (RuBP), the CO(2) acceptor and substrate for RubisCO. Functions in an archaeal AMP degradation pathway, together with AMP phosphorylase and RubisCO. The chain is Ribose 1,5-bisphosphate isomerase from Pyrococcus horikoshii (strain ATCC 700860 / DSM 12428 / JCM 9974 / NBRC 100139 / OT-3).